The following is a 441-amino-acid chain: GTPase Der (441 aa).

2 EngA-type G domains span residues 4-169 (PIVA…PEGS) and 178-353 (PKVA…DAQT). Residues 10–17 (GRPNVGKS), 57–61 (DTGGI), 120–123 (NKVD), 184–191 (GKPNVGKS), 231–235 (DTAGL), and 296–299 (NKWD) each bind GTP. The 85-residue stretch at 354 to 438 (MRIPTGVLNE…SIRFINRERK (85 aa)) folds into the KH-like domain.

The protein belongs to the TRAFAC class TrmE-Era-EngA-EngB-Septin-like GTPase superfamily. EngA (Der) GTPase family. Associates with the 50S ribosomal subunit.

In terms of biological role, GTPase that plays an essential role in the late steps of ribosome biogenesis. This is GTPase Der from Lachnospira eligens (strain ATCC 27750 / DSM 3376 / VPI C15-48 / C15-B4) (Eubacterium eligens).